The sequence spans 332 residues: Ribose-phosphate pyrophosphokinase (332 aa).

ATP-binding positions include 43 to 45 (DGE) and 102 to 103 (RQ). The Mg(2+) site is built by His136 and Asp176. Lys199 is an active-site residue. D-ribose 5-phosphate is bound by residues Arg201, Asp225, and 229–233 (DTGGT).

The protein belongs to the ribose-phosphate pyrophosphokinase family. Class I subfamily. As to quaternary structure, homohexamer. The cofactor is Mg(2+).

It localises to the cytoplasm. The enzyme catalyses D-ribose 5-phosphate + ATP = 5-phospho-alpha-D-ribose 1-diphosphate + AMP + H(+). Its pathway is metabolic intermediate biosynthesis; 5-phospho-alpha-D-ribose 1-diphosphate biosynthesis; 5-phospho-alpha-D-ribose 1-diphosphate from D-ribose 5-phosphate (route I): step 1/1. In terms of biological role, involved in the biosynthesis of the central metabolite phospho-alpha-D-ribosyl-1-pyrophosphate (PRPP) via the transfer of pyrophosphoryl group from ATP to 1-hydroxyl of ribose-5-phosphate (Rib-5-P). The chain is Ribose-phosphate pyrophosphokinase from Mycoplasma genitalium (strain ATCC 33530 / DSM 19775 / NCTC 10195 / G37) (Mycoplasmoides genitalium).